Reading from the N-terminus, the 271-residue chain is Tryptophan synthase alpha chain (271 aa).

Residues glutamate 59 and aspartate 70 each act as proton acceptor in the active site.

This sequence belongs to the TrpA family. As to quaternary structure, tetramer of two alpha and two beta chains.

The enzyme catalyses (1S,2R)-1-C-(indol-3-yl)glycerol 3-phosphate + L-serine = D-glyceraldehyde 3-phosphate + L-tryptophan + H2O. It functions in the pathway amino-acid biosynthesis; L-tryptophan biosynthesis; L-tryptophan from chorismate: step 5/5. Functionally, the alpha subunit is responsible for the aldol cleavage of indoleglycerol phosphate to indole and glyceraldehyde 3-phosphate. In Methanosarcina mazei (strain ATCC BAA-159 / DSM 3647 / Goe1 / Go1 / JCM 11833 / OCM 88) (Methanosarcina frisia), this protein is Tryptophan synthase alpha chain.